A 905-amino-acid polypeptide reads, in one-letter code: Probable aromatic-L-amino-acid decarboxylase (905 aa).

The tract at residues 250 to 296 (YLNPIIKTPPHNERVPKMKTNISKTRKKKGKVSDASKDSRPSETKKE) is disordered. Positions 280–296 (KVSDASKDSRPSETKKE) are enriched in basic and acidic residues. Residues Thr492 and Ser591 each coordinate pyridoxal 5'-phosphate. The residue at position 648 (Lys648) is an N6-(pyridoxal phosphate)lysine. Residues 861–905 (HTAEYADPPGKSNKSPQVAAKGELPSAAPPSSRTPNSDISEKSDR) are disordered. The segment covering 889–898 (PPSSRTPNSD) has biased composition (polar residues).

Belongs to the group II decarboxylase family. Homodimer. The cofactor is pyridoxal 5'-phosphate.

It carries out the reaction L-dopa + H(+) = dopamine + CO2. It catalyses the reaction 5-hydroxy-L-tryptophan + H(+) = serotonin + CO2. It participates in catecholamine biosynthesis; dopamine biosynthesis; dopamine from L-tyrosine: step 2/2. Its function is as follows. Catalyzes the decarboxylation of L-3,4-dihydroxyphenylalanine (DOPA) to dopamine, L-5-hydroxytryptophan to serotonin and L-tryptophan to tryptamine. This chain is Probable aromatic-L-amino-acid decarboxylase (hdl-1), found in Caenorhabditis elegans.